We begin with the raw amino-acid sequence, 171 residues long: S-ribosylhomocysteine lyase (171 aa).

The Fe cation site is built by H54, H58, and C128.

Belongs to the LuxS family. As to quaternary structure, homodimer. The cofactor is Fe cation.

It catalyses the reaction S-(5-deoxy-D-ribos-5-yl)-L-homocysteine = (S)-4,5-dihydroxypentane-2,3-dione + L-homocysteine. Involved in the synthesis of autoinducer 2 (AI-2) which is secreted by bacteria and is used to communicate both the cell density and the metabolic potential of the environment. The regulation of gene expression in response to changes in cell density is called quorum sensing. Catalyzes the transformation of S-ribosylhomocysteine (RHC) to homocysteine (HC) and 4,5-dihydroxy-2,3-pentadione (DPD). The protein is S-ribosylhomocysteine lyase of Yersinia enterocolitica serotype O:8 / biotype 1B (strain NCTC 13174 / 8081).